Consider the following 640-residue polypeptide: MYEVKLKVELEDKVLEVTQGTTPYDILCDYFKDRKDVISCRIDGVYSDMSSEILKDCKLELMTFEDDGARDIFWHSSAHVLGNALVNLYPDAKLVHGPPIEEGFFYDVDVTDPISSEDYEKIEEEMVKIMKKNYRFERVIKSKEELLEAYRDNPCKTHFIMKGVDKESSVYRNGDFFDMCLGPHIRSTGVIKAVKVLKNSSAYFLNDPNLKSLQRIYAITFPSKGMMDEYLKRKEEAKERDHRKIGTELDLFFFSKYSPGSCFFLPNGTTMYNTLIEFLREEYRKRGFKEVITPNIFCTQLWEESGHLQNYKENMFIIEGDTFALKPMNCPGHCVMFRHQDHSFRDLPLRLADFGVLHRNELSGTLTGLTRVRRFQQDDAHIFCTKDQVKEEIKGCLEFLSFVYGVFGFRFELVLSTRPEKYLGSVDEWDRAEKALADAMDESNMPFKINAGDGAFYGPKIDITLHDALGRRIQCATIQLDFQLPQRFELKYRDSDGQCRTPVIIHRAILGSIERMIAIILESFGKRLPFWISPRQIAIVNMGNPDYVGKVRSVLARFRLDVIDDGNTLSKRIRTAETSGYALVCVVGKKEAEANEINIRFNKSNRNIGLYELRDILDRMADEKVELDSILPIDKVSISK.

The TGS domain occupies 1-63 (MYEVKLKVEL…LKDCKLELMT (63 aa)).

The protein belongs to the class-II aminoacyl-tRNA synthetase family.

It localises to the cytoplasm. It carries out the reaction tRNA(Thr) + L-threonine + ATP = L-threonyl-tRNA(Thr) + AMP + diphosphate + H(+). The chain is Probable threonine--tRNA ligase, cytoplasmic from Encephalitozoon cuniculi (strain GB-M1) (Microsporidian parasite).